The chain runs to 70 residues: Prokaryotic ubiquitin-like protein UBact (70 aa).

Basic and acidic residues-rich tracts occupy residues 1–15 (MPDQ…RKQG) and 24–50 (TRHD…RDPG). Residues 1–70 (MPDQRQQERS…RQQRREQSGE (70 aa)) form a disordered region. An Isoglutamyl lysine isopeptide (Glu-Lys) (interchain with K-? in acceptor proteins) cross-link involves residue E70.

The protein belongs to the ubiquitin-like protein UBact family.

May function as a protein modifier covalently attached to lysine residues of substrate proteins. This may serve to target the modified proteins for degradation by proteasomes. This chain is Prokaryotic ubiquitin-like protein UBact, found in Terrybacteria sp. (strain RIFCSPHIGHO2_01_FULL_58_15).